We begin with the raw amino-acid sequence, 303 residues long: GTPase Era (303 aa).

One can recognise an Era-type G domain in the interval 7–174 (KSGFVAILGR…IDTLSEKLDE (168 aa)). The tract at residues 15 to 22 (GRPNVGKS) is G1. Position 15–22 (15–22 (GRPNVGKS)) interacts with GTP. Positions 41–45 (QTTRN) are G2. A G3 region spans residues 62 to 65 (DTPG). GTP is bound by residues 62–66 (DTPGI) and 124–127 (NKID). The tract at residues 124-127 (NKID) is G4. The interval 153–155 (ISA) is G5. The region spanning 205–283 (TREEVPHSIA…YLETWVKIKN (79 aa)) is the KH type-2 domain.

This sequence belongs to the TRAFAC class TrmE-Era-EngA-EngB-Septin-like GTPase superfamily. Era GTPase family. In terms of assembly, monomer.

Its subcellular location is the cytoplasm. It localises to the cell membrane. In terms of biological role, an essential GTPase that binds both GDP and GTP, with rapid nucleotide exchange. Plays a role in 16S rRNA processing and 30S ribosomal subunit biogenesis and possibly also in cell cycle regulation and energy metabolism. The chain is GTPase Era from Lactococcus lactis subsp. lactis (strain IL1403) (Streptococcus lactis).